Reading from the N-terminus, the 238-residue chain is Small ribosomal subunit protein uS2 (238 aa).

Belongs to the universal ribosomal protein uS2 family.

The sequence is that of Small ribosomal subunit protein uS2 from Synechococcus sp. (strain CC9311).